Reading from the N-terminus, the 478-residue chain is Zinc metalloproteinase/disintegrin VMP-II (478 aa).

An N-terminal signal peptide occupies residues 1-20; that stretch reads MIQVLLVTICLAVFPYQGSS. Positions 21 to 190 are excised as a propeptide; sequence IILESGNVND…KASQLNLTPE (170 aa). The region spanning 197 to 393 is the Peptidase M12B domain; sequence RYIELVIVAD…HNPQCMLNEP (197 aa). Ca(2+) is bound by residues E200 and D284. 3 disulfide bridges follow: C308/C388, C348/C372, and C350/C355. H333 is a binding site for Zn(2+). E334 is a catalytic residue. The Zn(2+) site is built by H337 and H343. Positions 388 and 391 each coordinate Ca(2+). A propeptide spanning residues 394–405 is cleaved from the precursor; the sequence is LGTDTVSRNELL. Positions 414-478 constitute a Disintegrin domain; the sequence is GSPANPCCDA…ADCPRNRFHA (65 aa). 4 disulfides stabilise this stretch: C420–C443, C434–C440, C439–C464, and C452–C471. Residues 456 to 458 carry the Cell attachment site motif; sequence RGD.

The protein belongs to the venom metalloproteinase (M12B) family. P-II subfamily. P-IIe sub-subfamily. In terms of assembly, heterodimer; disulfide-linked (disintegrin). The cofactor is Zn(2+). As to expression, expressed by the venom gland.

The protein resides in the secreted. In terms of biological role, impairs hemostasis in the envenomed animal. Functionally, this recombinant protein inhibits ADP-induced platelet aggregation in whole human blood and this effect is concentration-dependent with an IC(50) of 34 nM. In Crotalus viridis viridis (Prairie rattlesnake), this protein is Zinc metalloproteinase/disintegrin VMP-II.